The following is a 200-amino-acid chain: Troponin I-like protein (200 aa).

2 disordered regions span residues 1–20 (MGDE…AEVR) and 181–200 (ENKA…ENEE). Residues 2 to 116 (GDEEKRKMEE…EDAKYDLEYE (115 aa)) are a coiled coil.

This sequence belongs to the troponin I family. As to expression, expressed in salivary gland, gut, muscle and cuticle (at protein level).

Its function is as follows. Inhibits endothelial cell proliferation and angiogenesis in a vertebrate host. Probably required for efficient blood feeding on vertebrate hosts. The protein is Troponin I-like protein of Haemaphysalis longicornis (Bush tick).